The following is a 287-amino-acid chain: ATP synthase gamma chain (287 aa).

Belongs to the ATPase gamma chain family. As to quaternary structure, F-type ATPases have 2 components, CF(1) - the catalytic core - and CF(0) - the membrane proton channel. CF(1) has five subunits: alpha(3), beta(3), gamma(1), delta(1), epsilon(1). CF(0) has three main subunits: a, b and c.

It is found in the cell inner membrane. Produces ATP from ADP in the presence of a proton gradient across the membrane. The gamma chain is believed to be important in regulating ATPase activity and the flow of protons through the CF(0) complex. The protein is ATP synthase gamma chain of Xylella fastidiosa (strain M12).